Consider the following 150-residue polypeptide: MQIILLEKVTNLGNLGDIVRVKDGFARNFLIPQRKARRATEAAIADFAVRRAELEKLAAEKLAAAEAVGIKLKDMVLEIGQKAGVDGRLFGSVTNHDIADALKAKGFTIEKSSVRLPTGPLKMAGDHPVAVAVHTDVVADITIRVVGEQA.

It belongs to the bacterial ribosomal protein bL9 family.

Binds to the 23S rRNA. The protein is Large ribosomal subunit protein bL9 of Polynucleobacter necessarius subsp. necessarius (strain STIR1).